A 320-amino-acid chain; its full sequence is Cytochrome f (320 aa).

An N-terminal signal peptide occupies residues 1–35 (MQTRNTFSWIREEITRSISVLLMIYIITWASISSA). Positions 36, 56, 59, and 60 each coordinate heme. A helical membrane pass occupies residues 286-306 (VQGLLFFLGSVVLAQIFLVLK).

This sequence belongs to the cytochrome f family. In terms of assembly, the 4 large subunits of the cytochrome b6-f complex are cytochrome b6, subunit IV (17 kDa polypeptide, petD), cytochrome f and the Rieske protein, while the 4 small subunits are PetG, PetL, PetM and PetN. The complex functions as a dimer. Heme serves as cofactor.

It localises to the plastid. The protein resides in the chloroplast thylakoid membrane. In terms of biological role, component of the cytochrome b6-f complex, which mediates electron transfer between photosystem II (PSII) and photosystem I (PSI), cyclic electron flow around PSI, and state transitions. The polypeptide is Cytochrome f (Lobularia maritima (Sweet alyssum)).